Consider the following 610-residue polypeptide: Calcium-dependent protein kinase 1 (610 aa).

Gly-2 is lipidated: N-myristoyl glycine. Cys-5 is lipidated: S-palmitoyl cysteine. The tract at residues 17–133 is disordered; sequence VSAAMWRPRD…HMKRVSSAGL (117 aa). 2 stretches are compositionally biased toward basic and acidic residues: residues 47-56 and 70-117; these read LRSRLSDEVQ and TDVE…DPPA. Positions 118 to 127 are enriched in basic residues; sequence KPKKPKHMKR. Residues 150-408 enclose the Protein kinase domain; the sequence is YSLGRKLGQG…AHQVLCHPWV (259 aa). ATP contacts are provided by residues 156-164 and Lys-179; that span reads LGQGQFGTT. Residue Asp-274 is the Proton acceptor of the active site. Ser-314 bears the Phosphoserine mark. The autoinhibitory domain stretch occupies residues 414–444; that stretch reads APDKPLDSAVLSRMKQFSAMNKFKKMALRVI. 4 consecutive EF-hand domains span residues 451–486, 487–522, 523–558, and 559–592; these read EEIA…VGAN, LKES…LNKI, ERED…FGVE, and DVRI…GSIT. Positions 464, 466, 468, 470, 475, 500, 502, 504, 506, 511, 536, 538, 540, 542, 547, 570, 572, 574, 576, and 581 each coordinate Ca(2+).

The protein belongs to the protein kinase superfamily. Ser/Thr protein kinase family. CDPK subfamily. In terms of assembly, interacts with 14-3-3 proteins.

The protein localises to the peroxisome membrane. The enzyme catalyses L-seryl-[protein] + ATP = O-phospho-L-seryl-[protein] + ADP + H(+). It catalyses the reaction L-threonyl-[protein] + ATP = O-phospho-L-threonyl-[protein] + ADP + H(+). Activated by calcium. Autophosphorylation may play an important role in the regulation of the kinase activity. Its function is as follows. May play a role in signal transduction pathways that involve calcium as a second messenger. Phosphorylates the Ca(2+)-ATPase ACA2 resulting in the inhibition of its calcium activation. This is Calcium-dependent protein kinase 1 (CPK1) from Arabidopsis thaliana (Mouse-ear cress).